Reading from the N-terminus, the 529-residue chain is Biotin-dependent 3-methylcrotonyl-coenzyme A carboxylase beta1 subunit (529 aa).

In terms of domain architecture, CoA carboxyltransferase N-terminal spans histidine 16 to arginine 272. One can recognise a CoA carboxyltransferase C-terminal domain in the interval glutamate 275–glutamine 521.

The protein belongs to the AccD/PCCB family. In terms of assembly, the biotin-dependent acyl-CoA carboxylase complex is composed of AccA1, which contains the biotin carboxylase (BC) and biotin carboxyl carrier protein (BCCP) domains, and AccD1, which contains the carboxyl transferase (CT) domain. The AccA1/AccD1 complex forms a dodecamer.

It carries out the reaction 3-methylbut-2-enoyl-CoA + N(6)-carboxybiotinyl-L-lysyl-[protein] = 3-methyl-(2E)-glutaconyl-CoA + N(6)-biotinyl-L-lysyl-[protein]. Its pathway is amino-acid degradation; L-leucine degradation. In terms of biological role, component of a biotin-dependent acyl-CoA carboxylase complex. This subunit transfers the CO2 from carboxybiotin to the CoA ester substrate. When associated with the alpha1 subunit AccA1, is involved in branched amino-acid catabolism with methylcrotonyl coenzyme A as the substrate. Shows residual with propionyl-CoA and acetyl-CoA. The sequence is that of Biotin-dependent 3-methylcrotonyl-coenzyme A carboxylase beta1 subunit from Mycobacterium tuberculosis (strain ATCC 25618 / H37Rv).